A 362-amino-acid chain; its full sequence is Dual-specificity RNA methyltransferase RlmN (362 aa).

The Proton acceptor role is filled by Glu-100. The Radical SAM core domain occupies 106–345 (EPDRNTLCIS…VFIRNSRGED (240 aa)). Cysteines 113 and 350 form a disulfide. Residues Cys-120, Cys-124, and Cys-127 each coordinate [4Fe-4S] cluster. S-adenosyl-L-methionine contacts are provided by residues 177–178 (GE), Ser-209, 231–233 (SLH), and Asn-307. Residue Cys-350 is the S-methylcysteine intermediate of the active site.

The protein belongs to the radical SAM superfamily. RlmN family. It depends on [4Fe-4S] cluster as a cofactor.

It localises to the cytoplasm. It catalyses the reaction adenosine(2503) in 23S rRNA + 2 reduced [2Fe-2S]-[ferredoxin] + 2 S-adenosyl-L-methionine = 2-methyladenosine(2503) in 23S rRNA + 5'-deoxyadenosine + L-methionine + 2 oxidized [2Fe-2S]-[ferredoxin] + S-adenosyl-L-homocysteine. The enzyme catalyses adenosine(37) in tRNA + 2 reduced [2Fe-2S]-[ferredoxin] + 2 S-adenosyl-L-methionine = 2-methyladenosine(37) in tRNA + 5'-deoxyadenosine + L-methionine + 2 oxidized [2Fe-2S]-[ferredoxin] + S-adenosyl-L-homocysteine. Specifically methylates position 2 of adenine 2503 in 23S rRNA and position 2 of adenine 37 in tRNAs. m2A2503 modification seems to play a crucial role in the proofreading step occurring at the peptidyl transferase center and thus would serve to optimize ribosomal fidelity. The protein is Dual-specificity RNA methyltransferase RlmN of Desulfotalea psychrophila (strain LSv54 / DSM 12343).